A 709-amino-acid polypeptide reads, in one-letter code: UV-stimulated scaffold protein A (709 aa).

Basic and acidic residues predominate over residues 1 to 10 (MDQKLSKLVE). The tract at residues 1-20 (MDQKLSKLVEELTTSGEPRL) is disordered. The interval 2-145 (DQKLSKLVEE…HFLRHNKKVD (144 aa)) is VHS-like. Residues 165-199 (KHLDKIYQERASQAEREMQEMSGEIESCLTEVESC) adopt a coiled-coil conformation. 2 disordered regions span residues 230-289 (SCAG…DSDL) and 386-406 (EGGE…EDDE). The segment covering 280-289 (PSDEDEDSDL) has biased composition (acidic residues). 2 positions are modified to phosphoserine: serine 281 and serine 287. Over residues 386–395 (EGGERRRTEA) the composition is skewed to basic and acidic residues. Acidic residues predominate over residues 397-406 (GDAEEDEDDE). Lysine 414 participates in a covalent cross-link: Glycyl lysine isopeptide (Lys-Gly) (interchain with G-Cter in ubiquitin). The segment at 469–495 (DHLPPPSSASPSRALPEPQEAQKLAAE) is disordered. Positions 477–486 (ASPSRALPEP) are enriched in low complexity. The UVSSA-type zinc finger occupies 564–591 (QHWCRAPRPDGRLCERQDRLKCPFHGKI). 4 residues coordinate Zn(2+): cysteine 567, cysteine 577, cysteine 585, and histidine 588. Residues 588–655 (HGKIVPRDDE…GKGRGKKRRY (68 aa)) are disordered. The segment covering 592–632 (VPRDDEGRPLDPEDRAREQRRQLQKQERPEWQDPELMRDVE) has biased composition (basic and acidic residues). The span at 646 to 655 (GKGRGKKRRY) shows a compositional bias: basic residues.

This sequence belongs to the UVSSA family. In terms of assembly, interacts with the elongating form of RNA polymerase II (RNA pol IIo) during transcription stress. Interacts with the TFIIH complex during transcription stress. Interacts with ERCC6. Interacts with ERCC8. Interacts with USP7. In terms of processing, monoubiquitinated at Lys-414 in response to transcription stress; this promotes efficient transfer of TFIIH to stalled RNA polymerase II.

The protein resides in the chromosome. Factor involved in transcription-coupled nucleotide excision repair (TC-NER), a mechanism that rapidly removes RNA polymerase II-blocking lesions from the transcribed strand of active genes. Acts as a key adapter that promotes recruitment of factors involved in TC-NER. Facilitates the ubiquitination of the elongating form of RNA polymerase II (RNA pol IIo) at DNA damage sites, thereby promoting RNA pol IIo backtracking and access by the TC-NER machinery to lesion sites. Also promotes stabilization of ERCC6/CSB by recruiting deubiquitinating enzyme USP7 to TC-NER complexes, preventing UV-induced degradation of ERCC6 by the proteasome. Mediates the recruitment of the TFIIH complex and other factors that are required for nucleotide excision repair to RNA polymerase II. Also required to inactivate stalled RNA polymerase II by blocking the access of TCEA1/TFIIS, thereby preventing reactivation of RNA polymerase II. Not involved in processing oxidative damage. The protein is UV-stimulated scaffold protein A of Homo sapiens (Human).